A 156-amino-acid polypeptide reads, in one-letter code: Ribosomal RNA large subunit methyltransferase H (156 aa).

S-adenosyl-L-methionine-binding positions include Leu73, Gly104, and 123–128 (LSALTL).

This sequence belongs to the RNA methyltransferase RlmH family. In terms of assembly, homodimer.

The protein resides in the cytoplasm. The catalysed reaction is pseudouridine(1915) in 23S rRNA + S-adenosyl-L-methionine = N(3)-methylpseudouridine(1915) in 23S rRNA + S-adenosyl-L-homocysteine + H(+). Its function is as follows. Specifically methylates the pseudouridine at position 1915 (m3Psi1915) in 23S rRNA. This chain is Ribosomal RNA large subunit methyltransferase H, found in Vibrio parahaemolyticus serotype O3:K6 (strain RIMD 2210633).